Consider the following 214-residue polypeptide: Large ribosomal subunit protein uL1 (214 aa).

The protein belongs to the universal ribosomal protein uL1 family. As to quaternary structure, part of the 50S ribosomal subunit.

In terms of biological role, binds directly to 23S rRNA. Probably involved in E site tRNA release. Functionally, protein L1 is also a translational repressor protein, it controls the translation of its operon by binding to its mRNA. The sequence is that of Large ribosomal subunit protein uL1 from Methanoregula boonei (strain DSM 21154 / JCM 14090 / 6A8).